Consider the following 206-residue polypeptide: MARYLGPKLKLSRREGTDLFLKSGVRAIDSKCKLETAPGQHGARKGRLSDYGLQLREKQKVRRIYGVLEKQFRNYYKEAARLKGNTGENLLQLLEQRLDNVVYRMGFASTRAEARQLVSHKAILVNGRVVNVPSYVIAPEDTVVIREKSKTQARIIAALELAEQREKPTWVEVDGKKLEGSFKRLPERSDLSADINEQLIVELYSK.

The 61-residue stretch at 96-156 folds into the S4 RNA-binding domain; sequence QRLDNVVYRM…EKSKTQARII (61 aa).

The protein belongs to the universal ribosomal protein uS4 family. Part of the 30S ribosomal subunit. Contacts protein S5. The interaction surface between S4 and S5 is involved in control of translational fidelity.

One of the primary rRNA binding proteins, it binds directly to 16S rRNA where it nucleates assembly of the body of the 30S subunit. Its function is as follows. With S5 and S12 plays an important role in translational accuracy. This Pseudoalteromonas translucida (strain TAC 125) protein is Small ribosomal subunit protein uS4.